The following is a 177-amino-acid chain: Large ribosomal subunit protein uL6 (177 aa).

This sequence belongs to the universal ribosomal protein uL6 family. As to quaternary structure, part of the 50S ribosomal subunit.

Functionally, this protein binds to the 23S rRNA, and is important in its secondary structure. It is located near the subunit interface in the base of the L7/L12 stalk, and near the tRNA binding site of the peptidyltransferase center. This Photobacterium profundum (strain SS9) protein is Large ribosomal subunit protein uL6.